Here is a 173-residue protein sequence, read N- to C-terminus: SPbeta prophage-derived putative HNH homing endonuclease YosQ (173 aa).

Functionally, a possible homing endonuclease, it is entirely encoded within the YosP intron. This is SPbeta prophage-derived putative HNH homing endonuclease YosQ (yosQ) from Bacillus subtilis (strain 168).